The chain runs to 515 residues: Protein disulfide-isomerase (515 aa).

An N-terminal signal peptide occupies residues 1-22; that stretch reads MAVVRVRAIVALLCLVAALGLA. 2 Thioredoxin domains span residues 23 to 139 and 351 to 480; these read EPLE…KRTG and FLEG…SGGQ. Catalysis depends on nucleophile residues Cys-58, Cys-61, Cys-402, and Cys-405. Disulfide bonds link Cys-58-Cys-61 and Cys-402-Cys-405. Residues 477 to 515 form a disordered region; that stretch reads SGGQDGAAADDDLEDLETDEETDLEEGDDDEQKIQKDEL. Positions 484-507 are enriched in acidic residues; the sequence is AADDDLEDLETDEETDLEEGDDDE. The Prevents secretion from ER signature appears at 512–515; it reads KDEL.

This sequence belongs to the protein disulfide isomerase family. In terms of assembly, heterodimer; heterodimerizes with the protein microsomal triglyceride transfer MTTP. Homodimer. Monomers and homotetramers may also occur. Also constitutes the structural subunit of prolyl 4-hydroxylase. Stabilizes this enzyme and retains it in the ER without contributing to the catalytic activity. Binds UBQLN1.

Its subcellular location is the endoplasmic reticulum. The protein resides in the endoplasmic reticulum lumen. It localises to the cell membrane. It carries out the reaction Catalyzes the rearrangement of -S-S- bonds in proteins.. This multifunctional protein catalyzes the formation, breakage and rearrangement of disulfide bonds. At the cell surface, seems to act as a reductase that cleaves disulfide bonds of proteins attached to the cell. May therefore cause structural modifications of exofacial proteins. Inside the cell, seems to form/rearrange disulfide bonds of nascent proteins. At high concentrations, functions as a chaperone that inhibits aggregation of misfolded proteins. At low concentrations, facilitates aggregation (anti-chaperone activity). Also acts a structural subunit of various enzymes such as prolyl 4-hydroxylase. The protein is Protein disulfide-isomerase (P4HB) of Gallus gallus (Chicken).